The chain runs to 160 residues: Ribosomal RNA large subunit methyltransferase H (160 aa).

S-adenosyl-L-methionine-binding positions include Leu76, Gly108, and 127–132; that span reads LGKMTW.

It belongs to the RNA methyltransferase RlmH family. In terms of assembly, homodimer.

Its subcellular location is the cytoplasm. It catalyses the reaction pseudouridine(1915) in 23S rRNA + S-adenosyl-L-methionine = N(3)-methylpseudouridine(1915) in 23S rRNA + S-adenosyl-L-homocysteine + H(+). Its function is as follows. Specifically methylates the pseudouridine at position 1915 (m3Psi1915) in 23S rRNA. This Rhizobium etli (strain ATCC 51251 / DSM 11541 / JCM 21823 / NBRC 15573 / CFN 42) protein is Ribosomal RNA large subunit methyltransferase H.